Reading from the N-terminus, the 376-residue chain is MLDLIQTRRDLHQIPEIGLEEFKTQAYLLDVIEKLTTGKDFVQIRTWRTGILVYLQGSQPERTIGWRTDIDGLPIVEQTGLLFASQHQGRMHACGHDFHMTIALGCLERALEEQPKNNLLFLFQPAEENEAGGMLMYEDGAFGDWLPDQFYGLHVRPDLKVGQIATNTHTLFAGTCEVKIRFKGKGGHAAFPHEANDALVVASYFVTQVQSVVSRNVNPIEGAVVTFGVFQAGTTNNVITDTAFLHGTIRALTQDMSLLVQKRVKTVAEGVAAAFDMEVEVELKQGGYLPVENNPALARELMDFFDEKDGIELIDIEPAMTGEDFGYLLSKVDGVMFWLGIDSPYALHHPQMSPKEEVLAIGVAAVSSFLKKKAAE.

Residue D69 is part of the active site. The active-site Proton acceptor is the E128.

This sequence belongs to the peptidase M20A family. N-acetyldiaminopimelate deacetylase subfamily.

It carries out the reaction N-acetyl-(2S,6S)-2,6-diaminopimelate + H2O = (2S,6S)-2,6-diaminopimelate + acetate. The protein operates within amino-acid biosynthesis; L-lysine biosynthesis via DAP pathway; LL-2,6-diaminopimelate from (S)-tetrahydrodipicolinate (acetylase route): step 3/3. Functionally, catalyzes the conversion of N-acetyl-diaminopimelate to diaminopimelate and acetate. This is N-acetyldiaminopimelate deacetylase from Streptococcus pneumoniae serotype 19F (strain G54).